The sequence spans 462 residues: UDP-N-acetylmuramoylalanine--D-glutamate ligase (462 aa).

111–117 (GTNGKTT) serves as a coordination point for ATP.

This sequence belongs to the MurCDEF family.

Its subcellular location is the cytoplasm. The catalysed reaction is UDP-N-acetyl-alpha-D-muramoyl-L-alanine + D-glutamate + ATP = UDP-N-acetyl-alpha-D-muramoyl-L-alanyl-D-glutamate + ADP + phosphate + H(+). It functions in the pathway cell wall biogenesis; peptidoglycan biosynthesis. Functionally, cell wall formation. Catalyzes the addition of glutamate to the nucleotide precursor UDP-N-acetylmuramoyl-L-alanine (UMA). The protein is UDP-N-acetylmuramoylalanine--D-glutamate ligase of Trichodesmium erythraeum (strain IMS101).